Here is a 142-residue protein sequence, read N- to C-terminus: MFGVAKRFWIPMVIVIVVAVAAVTVSRLHSVFGSHQHAPDTGNLDPIIAFYPKHVLYEVFGPPGTVASINYLDADAQPHEVVNAAVPWSFTIVTTLTAVVANVVARGDGASLGCRITVNEVIREERIVNAYHAHTSCLVKSA.

The next 2 helical transmembrane spans lie at 8 to 28 (FWIP…VSRL) and 81 to 101 (VVNA…AVVA).

The protein belongs to the MmpS family.

It is found in the cell membrane. This chain is Probable transport accessory protein MmpS1 (mmpS1), found in Mycobacterium bovis (strain ATCC BAA-935 / AF2122/97).